A 946-amino-acid chain; its full sequence is Phosphatidylinositol 4,5-bisphosphate 5-phosphatase INP51 (946 aa).

In terms of domain architecture, SAC spans 151-480; sequence LKKLFSDGTF…YYWLDRTYTK (330 aa). Disordered stretches follow at residues 872 to 902 and 927 to 946; these read SDSI…SDLK and PKRD…FIER. A compositionally biased stretch (acidic residues) spans 936-946; the sequence is ENEDEPLFIER.

It belongs to the synaptojanin family. The protein in the central section; belongs to the inositol 1,4,5-trisphosphate 5-phosphatase family. Interacts with IRS4 and TAX4.

The protein localises to the cytoplasm. The protein resides in the cytoskeleton. Its subcellular location is the actin patch. It catalyses the reaction a 1,2-diacyl-sn-glycero-3-phospho-(1D-myo-inositol-4,5-bisphosphate) + H2O = a 1,2-diacyl-sn-glycero-3-phospho-(1D-myo-inositol 4-phosphate) + phosphate. Its activity is regulated as follows. IRS4 and TAX4 are both positive regulator of INP51 activity and phosphatidylinositol 4,5-bisphosphate turnover. Functionally, controls the cellular levels and subcellular distribution of phosphatidylinositol 4,5-bisphosphate (PtdIns(4,5)P2). Does not utilize phosphatidylinositol 3,5-bisphosphate (PtdIns(3,5)P2), nor phosphatidylinositol 3-phosphate (PtdIns(3)P) and phosphatidylinositol 4-phosphate (PtdIns(4)P). Plays an essential role in a TGN (trans Golgi network)-to-early endosome pathway. Involved in endocytosis and acts as a negative regulator of the Slm pathway which modulates polarized actin assembly and growth. The polypeptide is Phosphatidylinositol 4,5-bisphosphate 5-phosphatase INP51 (INP51) (Saccharomyces cerevisiae (strain ATCC 204508 / S288c) (Baker's yeast)).